Consider the following 357-residue polypeptide: Dynein axonemal assembly factor 10 (357 aa).

4 WD repeats span residues 80–127 (EFTN…IPIW), 132–170 (AHQG…NSAN), 184–223 (EQTN…IQST), and 277–321 (EPNQ…IDKV).

As to quaternary structure, interacts with PIH1D1; the interaction associates DNAAF10 with the R2TP complex. Interacts with several dynein axonemal assembly factors.

It is found in the dynein axonemal particle. Its function is as follows. Key assembly factor specifically required for the stability of axonemal dynein heavy chains in cytoplasm. The polypeptide is Dynein axonemal assembly factor 10 (dnaaf10) (Dictyostelium discoideum (Social amoeba)).